The chain runs to 67 residues: Conotoxin TxMMSK-01 (67 aa).

The signal sequence occupies residues 1-20 (MMSKLGVLLITCLLLFPLTA). A propeptide spanning residues 21–53 (VPLDGDQPADQPAERLQDDISSENHPFFDPVKR) is cleaved from the precursor. 3 disulfides stabilise this stretch: cysteine 54-cysteine 66, cysteine 55-cysteine 62, and cysteine 59-cysteine 65. Position 64 is a 4-hydroxyproline (proline 64). A Cysteine amide modification is found at cysteine 66.

The protein belongs to the conotoxin M superfamily. In terms of tissue distribution, expressed by the venom duct.

It is found in the secreted. The polypeptide is Conotoxin TxMMSK-01 (Conus textile (Cloth-of-gold cone)).